Consider the following 190-residue polypeptide: Potassium-transporting ATPase KdpC subunit (190 aa).

The helical transmembrane segment at 13 to 33 threads the bilayer; the sequence is VGFLLLTLVCGVVYPGIVTII.

It belongs to the KdpC family. In terms of assembly, the system is composed of three essential subunits: KdpA, KdpB and KdpC.

Its subcellular location is the cell membrane. Functionally, part of the high-affinity ATP-driven potassium transport (or Kdp) system, which catalyzes the hydrolysis of ATP coupled with the electrogenic transport of potassium into the cytoplasm. This subunit acts as a catalytic chaperone that increases the ATP-binding affinity of the ATP-hydrolyzing subunit KdpB by the formation of a transient KdpB/KdpC/ATP ternary complex. This chain is Potassium-transporting ATPase KdpC subunit, found in Listeria welshimeri serovar 6b (strain ATCC 35897 / DSM 20650 / CCUG 15529 / CIP 8149 / NCTC 11857 / SLCC 5334 / V8).